Reading from the N-terminus, the 527-residue chain is Laccase-5 (527 aa).

An N-terminal signal peptide occupies residues 1–23; that stretch reads MGKFHSFVNVVALSLSLSGRVFG. One can recognise a Plastocyanin-like 1 domain in the interval 25 to 150; it reads IGPVTDLTIS…DGLRGPLVVY (126 aa). 2 N-linked (GlcNAc...) asparagine glycosylation sites follow: Asn-74 and Asn-77. Cu cation contacts are provided by His-87, His-89, His-132, and His-134. 2 cysteine pairs are disulfide-bonded: Cys-108/Cys-516 and Cys-140/Cys-230. N-linked (GlcNAc...) asparagine glycans are attached at residues Asn-156, Asn-209, Asn-233, Asn-242, Asn-276, Asn-317, Asn-358, Asn-366, Asn-393, and Asn-402. A Plastocyanin-like 2 domain is found at 162–306; the sequence is VDDDTTVITL…GGVNSAILRY (145 aa). The region spanning 373 to 498 is the Plastocyanin-like 3 domain; the sequence is TVPVLLQILS…AGFAIVFAED (126 aa). The Cu cation site is built by His-425, His-428, His-430, His-480, Cys-481, His-482, and His-486.

The protein belongs to the multicopper oxidase family. Requires Cu cation as cofactor.

It is found in the secreted. It catalyses the reaction 4 hydroquinone + O2 = 4 benzosemiquinone + 2 H2O. Functionally, lignin degradation and detoxification of lignin-derived products. The protein is Laccase-5 (LCC5) of Trametes versicolor (White-rot fungus).